The chain runs to 251 residues: Haloacid dehalogenase-like hydrolase domain-containing protein 3 (251 aa).

Residue lysine 15 is modified to N6-acetyllysine; alternate. Lysine 15 carries the post-translational modification N6-succinyllysine; alternate. Lysine 130 carries the post-translational modification N6-acetyllysine.

It belongs to the HAD-like hydrolase superfamily.

The chain is Haloacid dehalogenase-like hydrolase domain-containing protein 3 (Hdhd3) from Mus musculus (Mouse).